Reading from the N-terminus, the 98-residue chain is NADH-ubiquinone oxidoreductase chain 4L (98 aa).

3 helical membrane-spanning segments follow: residues 1 to 21, 29 to 49, and 61 to 81; these read MSMV…GLLM, SLLC…VTIL, and IILL…LVMV.

This sequence belongs to the complex I subunit 4L family. Core subunit of respiratory chain NADH dehydrogenase (Complex I) which is composed of 45 different subunits.

It is found in the mitochondrion inner membrane. It carries out the reaction a ubiquinone + NADH + 5 H(+)(in) = a ubiquinol + NAD(+) + 4 H(+)(out). Its function is as follows. Core subunit of the mitochondrial membrane respiratory chain NADH dehydrogenase (Complex I) which catalyzes electron transfer from NADH through the respiratory chain, using ubiquinone as an electron acceptor. Part of the enzyme membrane arm which is embedded in the lipid bilayer and involved in proton translocation. The protein is NADH-ubiquinone oxidoreductase chain 4L (MT-ND4L) of Callorhinus ursinus (Northern fur seal).